The primary structure comprises 452 residues: uncharacterized protein (452 aa).

Residues 1–452 (MTAVSSNRNP…LRKPEADTAL (452 aa)) are disordered. 4 stretches are compositionally biased toward polar residues: residues 29–41 (RTGT…VSSN), 95–111 (SPQT…SNRN), 129–144 (SPQT…SSNR), and 163–176 (SPQT…AVSS). Over residues 177-193 (NRDHEDDGCLLKQESRG) the composition is skewed to basic and acidic residues. 7 stretches are compositionally biased toward polar residues: residues 197 to 212 (SPQT…SSNR), 231 to 245 (SPQT…VSSN), 265 to 280 (SPQT…SSNR), 299 to 314 (SPQT…SSNR), 333 to 347 (SPQT…VSSK), 376 to 394 (TAVS…SNRN), and 412 to 426 (SPQT…VSSN). The segment covering 439–452 (EPQELRKPEADTAL) has biased composition (basic and acidic residues).

This is an uncharacterized protein from Homo sapiens (Human).